Reading from the N-terminus, the 562-residue chain is ATP-dependent RNA helicase dbp2 (562 aa).

Residues 132–160 carry the Q motif motif; that stretch reads ETFDEAGFPRYVMDEVKAQGFPAPTAIQS. The Helicase ATP-binding domain occupies 163–338; sequence WPMALSGRDV…ADFLTDFIQV (176 aa). Residue 176-183 coordinates ATP; that stretch reads AETGSGKT. A DEAD box motif is present at residues 286-289; it reads DEAD. In terms of domain architecture, Helicase C-terminal spans 370–515; that stretch reads HLEKIMEGRE…QIDPRLAEMA (146 aa). The RNA-binding RGG-box stretch occupies residues 526-548; that stretch reads GGYRGRGGGGWRGGRGGGGGGGS. The segment covering 536–550 has biased composition (gly residues); sequence WRGGRGGGGGGGSVG. The tract at residues 536–562 is disordered; it reads WRGGRGGGGGGGSVGGANALPLNNRRW.

The protein belongs to the DEAD box helicase family. DDX5/DBP2 subfamily. In terms of assembly, associates with polysomes.

The protein resides in the cytoplasm. It localises to the nucleus. The enzyme catalyses ATP + H2O = ADP + phosphate + H(+). In terms of biological role, ATP-dependent RNA helicase involved nonsense-mediated mRNA decay and ribosome biogenesis through rRNA processing. The chain is ATP-dependent RNA helicase dbp2 (drh-1) from Neurospora crassa (strain ATCC 24698 / 74-OR23-1A / CBS 708.71 / DSM 1257 / FGSC 987).